A 59-amino-acid polypeptide reads, in one-letter code: UPF0181 protein YoaH (59 aa).

Belongs to the UPF0181 family.

This chain is UPF0181 protein YoaH, found in Shigella flexneri serotype 5b (strain 8401).